The primary structure comprises 161 residues: uncharacterized protein (161 aa).

A helical transmembrane segment spans residues 5-25 (GPTLLSLLAALLVSLGLLLWY).

The protein belongs to the IIV-6 203L/325L family.

Its subcellular location is the membrane. This is an uncharacterized protein from Invertebrate iridescent virus 3 (IIV-3).